A 189-amino-acid chain; its full sequence is GTP cyclohydrolase 1 (189 aa).

Zn(2+) contacts are provided by C78, H81, and C150.

The protein belongs to the GTP cyclohydrolase I family. Homomer.

The enzyme catalyses GTP + H2O = 7,8-dihydroneopterin 3'-triphosphate + formate + H(+). It functions in the pathway cofactor biosynthesis; 7,8-dihydroneopterin triphosphate biosynthesis; 7,8-dihydroneopterin triphosphate from GTP: step 1/1. The polypeptide is GTP cyclohydrolase 1 (Bacillus cytotoxicus (strain DSM 22905 / CIP 110041 / 391-98 / NVH 391-98)).